The following is a 641-amino-acid chain: Choline O-acetyltransferase (641 aa).

Serine 17 carries the post-translational modification Phosphoserine. Catalysis depends on histidine 335, which acts as the Proton acceptor. Serine 366 bears the Phosphoserine mark. CoA-binding positions include 413–425 (GKTFIKKQKCSPD), serine 451, and glutamine 552. Residues 615 to 641 (CSSRQPADSKPPTAKERARGPSQAKQS) form a disordered region.

Belongs to the carnitine/choline acetyltransferase family.

The catalysed reaction is choline + acetyl-CoA = acetylcholine + CoA. Its function is as follows. Catalyzes the reversible synthesis of acetylcholine (ACh) from acetyl CoA and choline at cholinergic synapses. The polypeptide is Choline O-acetyltransferase (Chat) (Mus musculus (Mouse)).